Here is a 729-residue protein sequence, read N- to C-terminus: 1,4-alpha-glucan branching enzyme GlgB 2 (729 aa).

Asp408 functions as the Nucleophile in the catalytic mechanism. Residue Glu461 is the Proton donor of the active site.

It belongs to the glycosyl hydrolase 13 family. GlgB subfamily. In terms of assembly, monomer.

It carries out the reaction Transfers a segment of a (1-&gt;4)-alpha-D-glucan chain to a primary hydroxy group in a similar glucan chain.. It functions in the pathway glycan biosynthesis; glycogen biosynthesis. Its function is as follows. Catalyzes the formation of the alpha-1,6-glucosidic linkages in glycogen by scission of a 1,4-alpha-linked oligosaccharide from growing alpha-1,4-glucan chains and the subsequent attachment of the oligosaccharide to the alpha-1,6 position. In Xanthomonas campestris pv. campestris (strain 8004), this protein is 1,4-alpha-glucan branching enzyme GlgB 2.